Consider the following 29-residue polypeptide: GLPICGETCFTGTCNTPGCSCTYPICTRD.

A cross-link (cyclopeptide (Gly-Asp)) is located at residues 1 to 29 (GLPICGETCFTGTCNTPGCSCTYPICTRD). Disulfide bonds link Cys5–Cys19, Cys9–Cys21, and Cys14–Cys26.

In terms of processing, this is a cyclic peptide.

Probably participates in a plant defense mechanism. This Psychotria brachyceras protein is Cyclotide psyleio A.